The sequence spans 369 residues: Phenylalanine--tRNA ligase alpha subunit (369 aa).

Glu270 contributes to the Mg(2+) binding site.

It belongs to the class-II aminoacyl-tRNA synthetase family. Phe-tRNA synthetase alpha subunit type 1 subfamily. In terms of assembly, tetramer of two alpha and two beta subunits. The cofactor is Mg(2+).

It localises to the cytoplasm. It carries out the reaction tRNA(Phe) + L-phenylalanine + ATP = L-phenylalanyl-tRNA(Phe) + AMP + diphosphate + H(+). The protein is Phenylalanine--tRNA ligase alpha subunit of Phenylobacterium zucineum (strain HLK1).